We begin with the raw amino-acid sequence, 353 residues long: Ferredoxin--NADP reductase 1 (353 aa).

Asp43, Gln51, Tyr56, Ala96, Phe135, Asp300, and Ser341 together coordinate FAD.

The protein belongs to the ferredoxin--NADP reductase type 2 family. In terms of assembly, homodimer. FAD serves as cofactor.

It catalyses the reaction 2 reduced [2Fe-2S]-[ferredoxin] + NADP(+) + H(+) = 2 oxidized [2Fe-2S]-[ferredoxin] + NADPH. This chain is Ferredoxin--NADP reductase 1, found in Cupriavidus metallidurans (strain ATCC 43123 / DSM 2839 / NBRC 102507 / CH34) (Ralstonia metallidurans).